The following is a 249-amino-acid chain: Zinc import ATP-binding protein ZnuC (249 aa).

Residues 1-219 form the ABC transporter domain; the sequence is MRLVSLRNAT…PEYQALFGSG (219 aa). 36–43 lines the ATP pocket; the sequence is GPNGSGKS.

Belongs to the ABC transporter superfamily. Zinc importer (TC 3.A.1.15.5) family. In terms of assembly, the complex is composed of two ATP-binding proteins (ZnuC), two transmembrane proteins (ZnuB) and a solute-binding protein (ZnuA).

The protein localises to the cell inner membrane. The catalysed reaction is Zn(2+)(out) + ATP(in) + H2O(in) = Zn(2+)(in) + ADP(in) + phosphate(in) + H(+)(in). Functionally, part of the ABC transporter complex ZnuABC involved in zinc import. Responsible for energy coupling to the transport system. This Ruegeria sp. (strain TM1040) (Silicibacter sp.) protein is Zinc import ATP-binding protein ZnuC.